The sequence spans 124 residues: MPTIQQLIRTERKTLKTKTKSPALRGCPERRGVCTRVYTSTPKKPNSALRKVARVRLTSGFEVTAYIGGIGHNLQEHSVVLLRGGRVKDLPGVRYHIVRGSLDTAGVKDRRQSRSKYGAKSPKE.

Asp-89 is modified (3-methylthioaspartic acid). Residues 103–124 are disordered; that stretch reads DTAGVKDRRQSRSKYGAKSPKE.

It belongs to the universal ribosomal protein uS12 family. As to quaternary structure, part of the 30S ribosomal subunit. Contacts proteins S8 and S17. May interact with IF1 in the 30S initiation complex.

Functionally, with S4 and S5 plays an important role in translational accuracy. Its function is as follows. Interacts with and stabilizes bases of the 16S rRNA that are involved in tRNA selection in the A site and with the mRNA backbone. Located at the interface of the 30S and 50S subunits, it traverses the body of the 30S subunit contacting proteins on the other side and probably holding the rRNA structure together. The combined cluster of proteins S8, S12 and S17 appears to hold together the shoulder and platform of the 30S subunit. The polypeptide is Small ribosomal subunit protein uS12 (Prochlorococcus marinus (strain NATL2A)).